The primary structure comprises 344 residues: Follistatin (344 aa).

An N-terminal signal peptide occupies residues 1–29; the sequence is MARPRHQPGGLCLLLLLLCQFMEDRSAQA. The region spanning 30 to 103 is the TB domain; that stretch reads GNCWLRQAKN…TCENVDCGPG (74 aa). 18 cysteine pairs are disulfide-bonded: Cys-32–Cys-55, Cys-42–Cys-88, Cys-56–Cys-91, Cys-95–Cys-106, Cys-100–Cys-116, Cys-118–Cys-150, Cys-122–Cys-143, Cys-132–Cys-164, Cys-168–Cys-179, Cys-173–Cys-189, Cys-192–Cys-225, Cys-196–Cys-218, Cys-207–Cys-239, Cys-245–Cys-256, Cys-250–Cys-267, Cys-270–Cys-302, Cys-274–Cys-295, and Cys-284–Cys-316. The region spanning 94 to 117 is the Follistatin-like 1 domain; the sequence is TCENVDCGPGKKCRMNKKNKPRCV. In terms of domain architecture, Kazal-like 1 spans 112–166; it reads NKPRCVCAPDCSNITWKGLVCGLDGKTYRNECALLKARCKEQPELQVQYQGKCKK. Asn-124 is a glycosylation site (N-linked (GlcNAc...) asparagine). The region spanning 167–190 is the Follistatin-like 2 domain; it reads TCRDVFCPGSSTCVVDQTNNAYCV. Residues 186-241 form the Kazal-like 2 domain; that stretch reads NAYCVTCNRICPEPTSSEQYLCGNDGVTYPSACHLRKATCLLGRSIGLAYEGKCIK. Positions 244 to 268 constitute a Follistatin-like 3 domain; the sequence is SCDDIQCTGGKKCLWDFKVGRGRCS. In terms of domain architecture, Kazal-like 3 spans 261–318; that stretch reads KVGRGRCSLCGELCPESKSEEPVCASDNATYASECAMKEAACSSGVLLEVKHSGSCNS. Asn-288 is a glycosylation site (N-linked (GlcNAc...) asparagine). Residues 316–344 are disordered; it reads CNSISEDTEDEEEDEDQDYSFPISSILEW. Acidic residues predominate over residues 321 to 333; it reads EDTEDEEEDEDQD.

In terms of assembly, monomer.

It localises to the secreted. Its function is as follows. Binds directly to activin and functions as an activin antagonist. Specific inhibitor of the biosynthesis and secretion of pituitary follicle stimulating hormone (FSH). The protein is Follistatin of Bubalus bubalis (Domestic water buffalo).